The chain runs to 221 residues: Vesicle transport v-SNARE 11 (221 aa).

Residue Ser2 is modified to N-acetylserine. Topologically, residues 2–198 are cytoplasmic; the sequence is SDVFDGYERQ…MTRRMNKNKW (197 aa). Positions 32–93 form a coiled coil; sequence EQKKQKLSEI…FKTEVKRITS (62 aa). A helical; Anchor for type IV membrane protein transmembrane segment spans residues 199–219; that stretch reads TIGAIIIALIAAIFIILYFKL. The Vesicular segment spans residues 220–221; that stretch reads TK.

This sequence belongs to the VTI1 family. In terms of assembly, forms SNARE complexes with the t-SNAREs SYP51 and either SYP21 or SYP22 in the PVC, and with a much lower affinity with SYP61 in the TGN. Does not interact with SYP41, SYP42 or VPS45. Binds to EPSIN1. Interacts with SCYL2B. Expressed in roots, stems, flowers and leaves.

It is found in the golgi apparatus. The protein resides in the trans-Golgi network membrane. It localises to the prevacuolar compartment membrane. The protein localises to the vacuole membrane. Its function is as follows. Functions as a v-SNARE responsible for targeting AtELP-containing vesicles from the trans-Golgi network (TGN) to the prevacuolar compartment (PVC) and mediates liposome fusion. May be also involved in retrograde traffic to the cis-Golgi. Promotes the formation of vacuolar membrane 'bulbs'. Necessary to deliver proteins to the lytic vacuole, but seems not involved in storage proteins transport. Required for amyloplast sedimentation in the endodermis during shoot gravitropism, which are thus acting as statoliths. Expression in the endodermis is essential for the shoot gravitropic response, whereas expression in other tissues may be responsible for the correct stem and leaf shape. The chain is Vesicle transport v-SNARE 11 from Arabidopsis thaliana (Mouse-ear cress).